We begin with the raw amino-acid sequence, 308 residues long: Paired box protein 3 homolog (308 aa).

The segment at residues 13–140 (GQGRVNQLGG…PAIKRLIGNK (128 aa)) is a DNA-binding region (paired). A PAI subdomain region spans residues 16-72 (RVNQLGGVFINGRPLPIHVRHAIISMAKKGIKPCHISRQLKVSHGAVSKILNRYAET). Residues 92–140 (AVEKEILIACDENPQMSAAELRDWLIHKDICTKGNAPTVPAIKRLIGNK) are RED subdomain. Positions 168-191 (CSKSSSDDEEGSSPSNDASSRRNR) are disordered. The homeobox DNA-binding region spans 187–246 (SRRNRTSFTAEQLDVLENAFRADTYPHANARESISKETGLSEEKIMTWFSNRRARCRKNM).

It belongs to the paired homeobox family.

Its subcellular location is the nucleus. Its function is as follows. Transcriptional activator. Regulates the lateral/ventral epidermal cell fate decision. This is Paired box protein 3 homolog from Caenorhabditis elegans.